The sequence spans 90 residues: Small ribosomal subunit protein uS17 (90 aa).

This sequence belongs to the universal ribosomal protein uS17 family. As to quaternary structure, part of the 30S ribosomal subunit.

In terms of biological role, one of the primary rRNA binding proteins, it binds specifically to the 5'-end of 16S ribosomal RNA. This is Small ribosomal subunit protein uS17 from Burkholderia mallei (strain NCTC 10247).